The chain runs to 80 residues: Large ribosomal subunit protein uL24 (80 aa).

It belongs to the universal ribosomal protein uL24 family. Part of the 50S ribosomal subunit.

One of two assembly initiator proteins, it binds directly to the 5'-end of the 23S rRNA, where it nucleates assembly of the 50S subunit. In terms of biological role, one of the proteins that surrounds the polypeptide exit tunnel on the outside of the subunit. The chain is Large ribosomal subunit protein uL24 from Prosthecochloris aestuarii (strain DSM 271 / SK 413).